The primary structure comprises 252 residues: Adapter protein MecA (252 aa).

Belongs to the MecA family. As to quaternary structure, homodimer.

Functionally, enables the recognition and targeting of unfolded and aggregated proteins to the ClpC protease or to other proteins involved in proteolysis. This chain is Adapter protein MecA, found in Streptococcus uberis (strain ATCC BAA-854 / 0140J).